The sequence spans 159 residues: Phosphopantetheine adenylyltransferase (159 aa).

Thr9 lines the substrate pocket. Residues 9–10 and His17 contribute to the ATP site; that span reads TF. The substrate site is built by Lys41, Leu73, and Arg87. ATP contacts are provided by residues 88-90, Glu98, and 123-129; these read GLR and YSFISST.

Belongs to the bacterial CoaD family. Homohexamer. It depends on Mg(2+) as a cofactor.

The protein localises to the cytoplasm. It carries out the reaction (R)-4'-phosphopantetheine + ATP + H(+) = 3'-dephospho-CoA + diphosphate. Its pathway is cofactor biosynthesis; coenzyme A biosynthesis; CoA from (R)-pantothenate: step 4/5. Reversibly transfers an adenylyl group from ATP to 4'-phosphopantetheine, yielding dephospho-CoA (dPCoA) and pyrophosphate. This chain is Phosphopantetheine adenylyltransferase, found in Pseudomonas syringae pv. tomato (strain ATCC BAA-871 / DC3000).